A 362-amino-acid chain; its full sequence is UDP-N-acetylglucosamine--N-acetylmuramyl-(pentapeptide) pyrophosphoryl-undecaprenol N-acetylglucosamine transferase (362 aa).

UDP-N-acetyl-alpha-D-glucosamine is bound by residues 15-17, Asn127, Arg165, Ser191, Ile247, 266-271, and Gln292; these read TGG and ALTVSE.

It belongs to the glycosyltransferase 28 family. MurG subfamily.

Its subcellular location is the cell inner membrane. The catalysed reaction is di-trans,octa-cis-undecaprenyl diphospho-N-acetyl-alpha-D-muramoyl-L-alanyl-D-glutamyl-meso-2,6-diaminopimeloyl-D-alanyl-D-alanine + UDP-N-acetyl-alpha-D-glucosamine = di-trans,octa-cis-undecaprenyl diphospho-[N-acetyl-alpha-D-glucosaminyl-(1-&gt;4)]-N-acetyl-alpha-D-muramoyl-L-alanyl-D-glutamyl-meso-2,6-diaminopimeloyl-D-alanyl-D-alanine + UDP + H(+). It participates in cell wall biogenesis; peptidoglycan biosynthesis. Its function is as follows. Cell wall formation. Catalyzes the transfer of a GlcNAc subunit on undecaprenyl-pyrophosphoryl-MurNAc-pentapeptide (lipid intermediate I) to form undecaprenyl-pyrophosphoryl-MurNAc-(pentapeptide)GlcNAc (lipid intermediate II). The chain is UDP-N-acetylglucosamine--N-acetylmuramyl-(pentapeptide) pyrophosphoryl-undecaprenol N-acetylglucosamine transferase from Shewanella sp. (strain MR-4).